The sequence spans 1869 residues: MAMNLPPLAGSGGAHTQPSLPALPAHLQSDTHLTAHLASRFHLSLPTAQLSSHALISLNTYTSSSKGPDGGKEGSAMAGAEEMAERAWLRLGHRSENQAVVFLGESGSGKSTLRSHLLASLLNKSSTPLSTKVSLAAYVFDTLTTTKTATTPTASKAGLFYELQYDTASTTNPVLIGGKLLDHRLERSRIADVPTGERNFHVLYYLLAGTSPAEKAHLGLEDSAVQQRRWKYLGHPTQLKVGINDAEGFQVFKNALKKLEFPRSEIAEICQILASVLHIGQLEFESSANTQVTGDDSGGFSHEGATVVTAAKNKDVLAIIAAFLGVNAQDLQNTLSYKTKMIHKERVTVMLDPNGARSHANELARTIYSLLVTYIIESINQRLCAADDAVANTISIIDFPGFEQQASTKSALDQLLNNSATEALYNLTLQNFFDRKADMLENEEVSVAATSYFDNSDAVRGLLKPGNGLLSILDDQSRRHRTDIQFLESMRKRFEGKNPAITAGSSTAKLPGSNFLTENSAPIFTVKHFAGEVDYQVKGLTEENGEVISGDLLNMINSTKSEFVARLFGQDALQTVTHPKERSTVMQATISSKPMRTPSVMSRKTARTARNQRVLQQKAAEEELEKLSENNSQAGGAAKAAASEQGASGQFLAALDNVTKAVADPSTNSYFVFCLKPNDRRIASQFDSKCVRTQVQTFGIAEISQRLRSADFSLFLPFGEFLGLADAETILMGSERERVEMVVEDKRWPSNEVRIGSTGVFVSERCWMEIAHLSEASLAHGRFGLPSDGGDGLTPHGASPADPFAASKERLLSTGNTPLMYGEKGKNGYFGANDGSDSRSEAGVSAFGGGDMFKNFDTREQMAERGNEKSLVEVEEYRDSASRKRWLFMVYLLTWFIPDFLIRFIGRMPRKDVRMAWREKLAINLIIWLSCLLAAFFIVVFPMLICPRQHVYSAAELSAYDGSSGSPGAYVSIRGYVFDLEKFAPRHYPPNLVSTEDILEYAGKDATSLFPVQVSALCQGRAGSIDPAVLIDYRSTNVTGSPTLISQQDINANFHDFRYFTNDTRKDWYFQQMAMLRANYLKGRIGYSPKYMKTLARNSRTIVSMNGRVFDLTEYVVGGRRTVGEDGKDISGVAEDSYDFMEPDVVTLFRQLSGADATRHWASLNLSEQAKTRMLTCLNNLFYVGDVDTRSSVRCKFAEYLVLAISIMLVTIIAFKFFAALQFGTKNMPENLDKFIMCQIPAYTEDEDSLRRAIDSAARMHYDDKRKLLVVICDGMIVGQGNDRSTPRIVLDILGVSETVDPEPLSFESLGEGLKQHNMGKVYSGLYEVQGHIVPFLVVVKVGKPSEVSRPGNRGKRDSQMVIMRFLNRVHYNLAMSPLELEMYHQIRNIIGVNPTFYEFMFQIDADTVVAPDSATRMVSAFLDDTRLIAVCGETALTNAKSSFITMIQVYEYWISHNLTKAFESLFGSVTCLPGCFSMYRIRAAETGKPLFVSREIVEAYATIRVDTLHMKNLLHLGEDRYLTTLLLKFHNKYKTKYIFRAHAWTIAPDSWAVFMSQRRRWINSTVHNLIELIPMAQLCGFCCFSMRFIVFVDLLSTVLQPVTMAYIVYLIVMVIRSPDVVPVTAFILIAAVFGLQAIIFILRRKWEMIGWMVLYILAIPVFSFGLPLYSFWYMDDFNWGNTRVVAGEKGKKIIVTDEGKFDPASIPRKKWEEYQGEIWEAQTVRDDARSEVSGFSYATKGHPGVQVGVSEYGGYSRPGSIAGGFSGAHAMPPLPMNTSRMSLAASEMGGNRASQFGGSQYFSPEDMVGLPSDDALLAEIREILRTADLMTVTKKGIKQELERRFGVPLDAKRAYINSATEALLSGQL.

The segment at methionine 1–leucine 23 is disordered. In terms of domain architecture, Myosin motor spans methionine 1–leucine 778. Position 104–111 (glycine 104–serine 111) interacts with ATP. Residues asparagine 123, asparagine 417, asparagine 426, and asparagine 557 are each glycosylated (N-linked (GlcNAc...) asparagine). 2 disordered regions span residues lysine 593 to glutamine 612 and alanine 620 to alanine 640. Residues glutamate 629 to alanine 640 show a composition bias toward low complexity. 2 N-linked (GlcNAc...) asparagine glycosylation sites follow: asparagine 630 and asparagine 657. The actin-binding stretch occupies residues leucine 655–aspartate 679. Helical transmembrane passes span tryptophan 886–glycine 906 and leucine 925–isoleucine 945. The 62-residue stretch at glutamine 949–phenylalanine 1010 folds into the Cytochrome b5 heme-binding domain. N-linked (GlcNAc...) asparagine glycosylation is found at asparagine 1037, asparagine 1062, and asparagine 1165. A helical transmembrane segment spans residues leucine 1201–leucine 1221. N-linked (GlcNAc...) asparagine glycosylation is found at asparagine 1458 and asparagine 1564. 3 helical membrane passes run leucine 1596–isoleucine 1616, valine 1622–isoleucine 1642, and methionine 1649–leucine 1669. Asparagine 1778 carries an N-linked (GlcNAc...) asparagine glycan. The DEK-C domain occupies leucine 1811–serine 1866.

This sequence in the N-terminal section; belongs to the TRAFAC class myosin-kinesin ATPase superfamily. Myosin family. It in the C-terminal section; belongs to the chitin synthase family. Class V subfamily.

It is found in the cell membrane. The catalysed reaction is [(1-&gt;4)-N-acetyl-beta-D-glucosaminyl](n) + UDP-N-acetyl-alpha-D-glucosamine = [(1-&gt;4)-N-acetyl-beta-D-glucosaminyl](n+1) + UDP + H(+). Polymerizes chitin, a structural polymer of the cell wall and septum, by transferring the sugar moiety of UDP-GlcNAc to the non-reducing end of the growing chitin polymer. Plays a role in cell wall integrity and is involved in tolerance to hyperosmotic conditions. Required to successfully penetrate the host plants and thus plays a key role in pathogenicity. The sequence is that of Chitin synthase 6 from Verticillium dahliae (strain VdLs.17 / ATCC MYA-4575 / FGSC 10137) (Verticillium wilt).